The sequence spans 358 residues: Probable translocation protein Y4yK (358 aa).

This sequence belongs to the FliN/MopA/SpaO family.

Its function is as follows. Could be involved in the secretion of an unknown factor. The protein is Probable translocation protein Y4yK of Sinorhizobium fredii (strain NBRC 101917 / NGR234).